Reading from the N-terminus, the 315-residue chain is Putative glycosyltransferase ORF315 (315 aa).

It belongs to the glycosyltransferase group 1 family. Glycosyltransferase 4 subfamily.

This chain is Putative glycosyltransferase ORF315, found in Acidianus convivator (ABV).